A 430-amino-acid chain; its full sequence is Citrate synthase (430 aa).

Catalysis depends on residues histidine 305 and aspartate 363.

The protein belongs to the citrate synthase family. Homohexamer.

It catalyses the reaction oxaloacetate + acetyl-CoA + H2O = citrate + CoA + H(+). The protein operates within carbohydrate metabolism; tricarboxylic acid cycle; isocitrate from oxaloacetate: step 1/2. Allosterically inhibited by NADH. The chain is Citrate synthase (gltA) from Coxiella burnetii (strain RSA 493 / Nine Mile phase I).